A 43-amino-acid polypeptide reads, in one-letter code: Large ribosomal subunit protein uL11 (43 aa).

It belongs to the universal ribosomal protein uL11 family. Part of the ribosomal stalk of the 50S ribosomal subunit. Interacts with L10 and the large rRNA to form the base of the stalk. L10 forms an elongated spine to which L12 dimers bind in a sequential fashion forming a multimeric L10(L12)X complex. Post-translationally, one or more lysine residues are methylated.

Functionally, forms part of the ribosomal stalk which helps the ribosome interact with GTP-bound translation factors. This Streptomyces galbus protein is Large ribosomal subunit protein uL11 (rplK).